The chain runs to 530 residues: B3 domain-containing protein REM-like 3 (530 aa).

DNA-binding regions (TF-B3) lie at residues 11 to 103 (KPHF…FGLS) and 144 to 241 (DFVV…FPLE). The segment at 251 to 276 (SKKVKQEVEHEESVKEETNVESGKLK) is disordered. Residues 254–276 (VKQEVEHEESVKEETNVESGKLK) show a composition bias toward basic and acidic residues. 2 consecutive DNA-binding regions (TF-B3) follow at residues 296-393 (NFVV…FPLE) and 431-530 (SFVV…WDKK).

It is found in the nucleus. The sequence is that of B3 domain-containing protein REM-like 3 from Arabidopsis thaliana (Mouse-ear cress).